The primary structure comprises 192 residues: Fe/S biogenesis protein NfuA (192 aa).

[4Fe-4S] cluster is bound by residues Cys149 and Cys152.

It belongs to the NfuA family. In terms of assembly, homodimer. The cofactor is [4Fe-4S] cluster.

Involved in iron-sulfur cluster biogenesis. Binds a 4Fe-4S cluster, can transfer this cluster to apoproteins, and thereby intervenes in the maturation of Fe/S proteins. Could also act as a scaffold/chaperone for damaged Fe/S proteins. This chain is Fe/S biogenesis protein NfuA, found in Shewanella frigidimarina (strain NCIMB 400).